Reading from the N-terminus, the 162-residue chain is Large ribosomal subunit protein uL30 (162 aa).

It belongs to the universal ribosomal protein uL30 family. As to quaternary structure, part of the 50S ribosomal subunit.

The protein is Large ribosomal subunit protein uL30 of Staphylothermus marinus (strain ATCC 43588 / DSM 3639 / JCM 9404 / F1).